The chain runs to 189 residues: Putative OVARIAN TUMOR DOMAIN-containing deubiquitinating enzyme 8 (189 aa).

The OTU domain occupies 1–103 (MMKSDGNCQF…GIHFNSIYKK (103 aa)). Aspartate 5 is an active-site residue. The Nucleophile role is filled by cysteine 8. Histidine 96 is a catalytic residue. The tract at residues 105 to 189 (KEKGSRSSSS…NRNHHFHYSE (85 aa)) is disordered. A coiled-coil region spans residues 120-181 (WMKLQRKKEN…KKEKKEKKNR (62 aa)). 2 short sequence motifs (nuclear localization signal) span residues 125-132 (RKKENEAK) and 163-170 (KKKAKVQK). The span at 126–174 (KKENEAKKKEEEEKERKDMEKEEKKKDKEDKKKDKEDKKKAKVQKEKKE) shows a compositional bias: basic and acidic residues. Residues 175 to 189 (KKEKKNRNHHFHYSE) show a composition bias toward basic residues.

Belongs to the peptidase C85 family.

The protein resides in the nucleus. The catalysed reaction is Thiol-dependent hydrolysis of ester, thioester, amide, peptide and isopeptide bonds formed by the C-terminal Gly of ubiquitin (a 76-residue protein attached to proteins as an intracellular targeting signal).. Hydrolase that can remove conjugated ubiquitin from proteins in vitro and may therefore play an important regulatory role at the level of protein turnover by preventing degradation. The sequence is that of Putative OVARIAN TUMOR DOMAIN-containing deubiquitinating enzyme 8 from Arabidopsis thaliana (Mouse-ear cress).